Here is a 383-residue protein sequence, read N- to C-terminus: MHGRRHLAASLTRALIQAPSRSISSTPSLLQTLDPSVPSPPAAGAGRLAELRRRLQADAPSLGDFTYSVEVGTRQRPLPKPKWMKETVPGGAKYAAIKAKLRELKLHTVCEEARCPNLGECWSGGETGTATATIMILGDTCTRGCRFCNVKTSRTPPPPDPDEPSNVAQAIASWGLEYIVITSVDRDDLPDQGSGHFAETVQKLKALKPEMLIEALVPDFRGDPSCVEKVATSGLHVFAHNIETVEELQRNVRDYRANFKQSIDVLEMAKEYAPPGTLTKTSIMLGCGETPDQVIRTMEKVRAADVDVITFGQYMRPSKRHMPVSEYVTPEAFEKYRALGVEMGFRYVASGPMVRSSYKAGEFYIKAMIEAERAKGTAADSSA.

Residues 25 to 34 (STPSLLQTLD) show a composition bias toward polar residues. Positions 25–44 (STPSLLQTLDPSVPSPPAAG) are disordered. [4Fe-4S] cluster is bound by residues Cys-110, Cys-115, Cys-121, Cys-141, Cys-145, Cys-148, and Ser-357. Positions 126-346 (ETGTATATIM…RALGVEMGFR (221 aa)) constitute a Radical SAM core domain.

The protein belongs to the radical SAM superfamily. Lipoyl synthase family. Requires [4Fe-4S] cluster as cofactor.

It is found in the mitochondrion. It catalyses the reaction [[Fe-S] cluster scaffold protein carrying a second [4Fe-4S](2+) cluster] + N(6)-octanoyl-L-lysyl-[protein] + 2 oxidized [2Fe-2S]-[ferredoxin] + 2 S-adenosyl-L-methionine + 4 H(+) = [[Fe-S] cluster scaffold protein] + N(6)-[(R)-dihydrolipoyl]-L-lysyl-[protein] + 4 Fe(3+) + 2 hydrogen sulfide + 2 5'-deoxyadenosine + 2 L-methionine + 2 reduced [2Fe-2S]-[ferredoxin]. It participates in protein modification; protein lipoylation via endogenous pathway; protein N(6)-(lipoyl)lysine from octanoyl-[acyl-carrier-protein]: step 2/2. Catalyzes the radical-mediated insertion of two sulfur atoms into the C-6 and C-8 positions of the octanoyl moiety bound to the lipoyl domains of lipoate-dependent enzymes, thereby converting the octanoylated domains into lipoylated derivatives. This is Lipoyl synthase, mitochondrial from Zea mays (Maize).